Here is a 234-residue protein sequence, read N- to C-terminus: Uracil-DNA glycosylase (234 aa).

Residue aspartate 68 is the Proton acceptor of the active site.

This sequence belongs to the uracil-DNA glycosylase (UDG) superfamily. UNG family.

It is found in the cytoplasm. It catalyses the reaction Hydrolyzes single-stranded DNA or mismatched double-stranded DNA and polynucleotides, releasing free uracil.. Functionally, excises uracil residues from the DNA which can arise as a result of misincorporation of dUMP residues by DNA polymerase or due to deamination of cytosine. This is Uracil-DNA glycosylase from Ruegeria sp. (strain TM1040) (Silicibacter sp.).